The following is a 686-amino-acid chain: Protein-glutamine gamma-glutamyltransferase 2 (686 aa).

Ala2 is modified (N-acetylalanine). Cystine bridges form between Cys230–Cys370 and Cys370–Cys371. Residues Cys277, His335, and Asp358 contribute to the active site. Residues Asn398, Asp400, Glu437, Glu447, and Glu452 each contribute to the Ca(2+) site. N6-acetyllysine is present on Lys468. 476–483 (RIRVGDSM) lines the GTP pocket. Glu538 is a Ca(2+) binding site. Residue 579 to 582 (RDLY) coordinates GTP. Gln632 participates in a covalent cross-link: Isoglutamyl lysine isopeptide (Gln-Lys) (interchain with K-?).

Belongs to the transglutaminase superfamily. Transglutaminase family. In terms of assembly, monomer. Interacts with phospholipase C; promoting alpha-1 adrenergic receptor signaling. Interacts with PLCD1. Ca(2+) is required as a cofactor. Disulfide bond formation inactivates the calcium-dependent acyltransferase activity. Cys-370 can form disulfide bonds with both Cys-230 and Cys-371: formation of a disulfide bond between Cys-230 and Cys-370 facilitates formation of the disulfide between Cys-370 and Cys-371, which promotes inactivation of the acyltransferase activity. May also form interchain disulfids between Cys-230 and Cys-370. Ca(2+) protects against disulfide bond formation and inactivation. Post-translationally, auto-transglutaminated: Forms covalent cross-links mediated by transglutaminase between Gln-632 and the epsilon-amino group of a lysine residue of itself or HMGB1, forming homopolymers and heteropolymers, respectively. In terms of processing, S-nitrosylated, leading to inactivation of the acyltransferase activity.

It localises to the cytoplasm. It is found in the cytosol. The protein resides in the nucleus. The protein localises to the chromosome. Its subcellular location is the secreted. It localises to the extracellular space. It is found in the extracellular matrix. The protein resides in the cell membrane. The protein localises to the mitochondrion. It carries out the reaction L-glutaminyl-[protein] + L-lysyl-[protein] = [protein]-L-lysyl-N(6)-5-L-glutamyl-[protein] + NH4(+). It catalyses the reaction L-glutaminyl-[protein] + serotonin = 5-serotonyl-L-glutamyl-[protein] + NH4(+). The catalysed reaction is L-glutaminyl-[protein] + dopamine = 5-dopaminyl-L-glutamyl-[protein] + NH4(+). The enzyme catalyses L-glutaminyl-[protein] + histamine = 5-histaminyl-L-glutamyl-[protein] + NH4(+). It carries out the reaction L-glutaminyl-[protein] + (R)-noradrenaline = 5-(R)-noradrenalinyl-L-glutamyl-[protein] + NH4(+). It catalyses the reaction L-glutaminyl-[protein] + H2O = L-glutamyl-[protein] + NH4(+). With respect to regulation, acyltransferase activity is regulated by the binding of GTP and Ca(2+): inactivated by GTP, which stabilizes its closed structure, thereby obstructing the accessibility of substrates to the active sites. In contrast, Ca(2+) acts as a cofactor by inducing conformational change to the active open form. In absence of Ca(2+), Mg(2+) may bind Ca(2+)-binding sites, promoting GTP-binding and subsequent inhibition of the acyltransferase activity. Extracellularly reduced and activated by CLIC3. Functionally, calcium-dependent acyltransferase that catalyzes the formation of covalent bonds between peptide-bound glutamine and various primary amines, such as gamma-amino group of peptide-bound lysine, or mono- and polyamines, thereby producing cross-linked or aminated proteins, respectively. Involved in many biological processes, such as bone development, angiogenesis, wound healing, cellular differentiation, chromatin modification and apoptosis. Acts as a protein-glutamine gamma-glutamyltransferase by mediating the cross-linking of proteins, such as ACO2, HSPB6, FN1, HMGB1, RAP1GDS1, SLC25A4/ANT1, SPP1 and WDR54. Under physiological conditions, the protein cross-linking activity is inhibited by GTP; inhibition is relieved by Ca(2+) in response to various stresses. When secreted, catalyzes cross-linking of proteins of the extracellular matrix, such as FN1 and SPP1 resulting in the formation of scaffolds. Plays a key role during apoptosis, both by (1) promoting the cross-linking of cytoskeletal proteins resulting in condensation of the cytoplasm, and by (2) mediating cross-linking proteins of the extracellular matrix, resulting in the irreversible formation of scaffolds that stabilize the integrity of the dying cells before their clearance by phagocytosis, thereby preventing the leakage of harmful intracellular components. In addition to protein cross-linking, can use different monoamine substrates to catalyze a vast array of protein post-translational modifications: mediates aminylation of serotonin, dopamine, noradrenaline or histamine into glutamine residues of target proteins to generate protein serotonylation, dopaminylation, noradrenalinylation or histaminylation, respectively. Mediates protein serotonylation of small GTPases during activation and aggregation of platelets, leading to constitutive activation of these GTPases. Plays a key role in chromatin organization by mediating serotonylation and dopaminylation of histone H3. Catalyzes serotonylation of 'Gln-5' of histone H3 (H3Q5ser) during serotonergic neuron differentiation, thereby facilitating transcription. Acts as a mediator of neurotransmission-independent role of nuclear dopamine in ventral tegmental area (VTA) neurons: catalyzes dopaminylation of 'Gln-5' of histone H3 (H3Q5dop), thereby regulating relapse-related transcriptional plasticity in the reward system. Regulates vein remodeling by mediating serotonylation and subsequent inactivation of ATP2A2/SERCA2. Also acts as a protein deamidase by mediating the side chain deamidation of specific glutamine residues of proteins to glutamate. Catalyzes specific deamidation of protein gliadin, a component of wheat gluten in the diet. May also act as an isopeptidase cleaving the previously formed cross-links. Also able to participate in signaling pathways independently of its acyltransferase activity: acts as a signal transducer in alpha-1 adrenergic receptor-mediated stimulation of phospholipase C-delta (PLCD) activity and is required for coupling alpha-1 adrenergic agonists to the stimulation of phosphoinositide lipid metabolism. The sequence is that of Protein-glutamine gamma-glutamyltransferase 2 from Mus musculus (Mouse).